A 257-amino-acid chain; its full sequence is MGNLFDSSKTLWGNMNHGSSRYSLNGKIMLASVIILFVAVILILCFHSYARWLFRRQNRRIRRRISAHLRSLAAARDPTQSSSSLSPLDPTVLEKIPIFVYSVKTHESPLEECSVCLSEFEEDDEGRVLPKCGHVFHVDCIDTWFRSRSSCPLCRAPVQPAQPVTEPEPVAAVFPSVKPIEDTEAGSSSSSDESESSTPSSSSGSPVRFPMEACEREPIDLVGIIVEIPREFQDSNSDLPADNGSNRRASLKRLWII.

Residues 28–48 form a helical membrane-spanning segment; it reads IMLASVIILFVAVILILCFHS. The segment at 113 to 155 adopts an RING-type; atypical zinc-finger fold; the sequence is CSVCLSEFEEDDEGRVLPKCGHVFHVDCIDTWFRSRSSCPLCR. The segment at 181 to 209 is disordered; that stretch reads EDTEAGSSSSSDESESSTPSSSSGSPVRF. Residues 185–206 show a composition bias toward low complexity; it reads AGSSSSSDESESSTPSSSSGSP.

The protein belongs to the RING-type zinc finger family. ATL subfamily.

Its subcellular location is the membrane. The enzyme catalyses S-ubiquitinyl-[E2 ubiquitin-conjugating enzyme]-L-cysteine + [acceptor protein]-L-lysine = [E2 ubiquitin-conjugating enzyme]-L-cysteine + N(6)-ubiquitinyl-[acceptor protein]-L-lysine.. The protein operates within protein modification; protein ubiquitination. The sequence is that of RING-H2 finger protein ATL5 (ATL5) from Arabidopsis thaliana (Mouse-ear cress).